We begin with the raw amino-acid sequence, 547 residues long: MSLVESPPWQALKSKYQELSSLHMRDFFAQDKKRGTRLSLEAAGLYFDYSKNRVDEKTIDLLCESANACNLPLRIEQLFSGKLTNESGEMVGFHTALRQVNNFSFKTNNNAIQEIHASWEKIKKLSIRIREGDYKGFTNKSITDIVNIGIGGSSLGPQMAYNALKPYVKAPLRCHFISNLDDTDFYETVRTLNPETTLFIITSKTFTTKETLENERRATEWLMQAAKKENLIQTHFMAVTAAPEKAHEFGIQKDNIFMLWPWVGGRFSVWSAAGLSLAIAIGWEEFFEFLRGAHAMDTHFRQAEFNKNMPILLALLSIWYINFFHAKTQAIIPYSQRLVYLPDYLTQLHMESLGKSVQLDGSAVHWQTGAVVWGDLGTNSQHSFHQLFLQGTMVIPVDFIAVLKNSRESHWQLPLIANCLGQSQTLMEGYDKEGVMRDLINQGIEHEKAEKLATYRLIRGNNPSNTIILEELNPYSLGSLLALYEHKVYVQSVIWNINPFDQWGVERGKHLAKDILQALQAETDQSSFDSSTERLINYVLKIKGNRP.

Glutamate 351 acts as the Proton donor in catalysis. Residues histidine 382 and lysine 509 contribute to the active site.

The protein belongs to the GPI family.

The protein localises to the cytoplasm. The enzyme catalyses alpha-D-glucose 6-phosphate = beta-D-fructose 6-phosphate. The protein operates within carbohydrate biosynthesis; gluconeogenesis. It functions in the pathway carbohydrate degradation; glycolysis; D-glyceraldehyde 3-phosphate and glycerone phosphate from D-glucose: step 2/4. Catalyzes the reversible isomerization of glucose-6-phosphate to fructose-6-phosphate. The protein is Glucose-6-phosphate isomerase of Coxiella burnetii (strain CbuK_Q154) (Coxiella burnetii (strain Q154)).